An 817-amino-acid polypeptide reads, in one-letter code: Dolichyl-phosphate-mannose--protein mannosyltransferase 1 (817 aa).

Ser2 carries the N-acetylserine modification. Residues 2 to 50 (SEEKTYKRVEQDDPVPELDIKQGPVRPFIVTDPSAELASLRTMVTLKEK) are Cytoplasmic-facing. A helical transmembrane segment spans residues 51–70 (LLVACLAVFTAVIRLHGLAW). Topologically, residues 71–135 (PDSVVFDEVH…DSFPSTTPYV (65 aa)) are lumenal. A helical membrane pass occupies residues 136-154 (LMRFFSASLGALTVILMYM). At 155-179 (TLRYSGVRMWVALMSAICFAVENSY) the chain is on the cytoplasmic side. Residues 180–200 (VTISRYILLDAPLMFFIAAAV) traverse the membrane as a helical segment. Topologically, residues 201 to 234 (YSFKKYEMYPANSLNAYKSLLATGIALGMASSSK) are lumenal. Residues 235–259 (WVGLFTVTWVGLLCIWRLWFMIGDL) traverse the membrane as a helical segment. The Cytoplasmic segment spans residues 260 to 273 (TKSSKSIFKVAFAK). The chain crosses the membrane as a helical span at residues 274-291 (LAFLLGVPFALYLVFFYI). Topologically, residues 292–584 (HFQSLTLDGD…GENNRNVYLL (293 aa)) are lumenal. MIR domains lie at 324-378 (VADV…LELY), 388-448 (FQNL…VEID), and 459-514 (ERVI…VENN). Residues Asn390 and Asn513 are each glycosylated (N-linked (GlcNAc...) asparagine). A helical membrane pass occupies residues 585-605 (GNAIVWWAVTAFIGIFGLIVI). The Cytoplasmic segment spans residues 606–685 (TELFSWQLGK…SYVFRSKRQM (80 aa)). Residues 686-710 (GYAVVITFLAASVYFFKSFSPIIYG) form a helical membrane-spanning segment. Topologically, residues 711-817 (TPWTQELCQK…LKVEKRAVLE (107 aa)) are lumenal. Asn743 carries an N-linked (GlcNAc...) asparagine glycan.

This sequence belongs to the glycosyltransferase 39 family. PMT1 and PMT2 form a functional heterodimer. The complex interacts with endoplasmic reticulum proteins EMP24, ERV25, ERP1, ERP2, CDC48, HRD1, USA1, YOS9, ERO1, PDI1, UBR1, Cue4, DFM1 and TED1. Forms also a minor complex with PMT3.

It localises to the endoplasmic reticulum membrane. The catalysed reaction is a di-trans,poly-cis-dolichyl beta-D-mannosyl phosphate + L-seryl-[protein] = 3-O-(alpha-D-mannosyl)-L-seryl-[protein] + a di-trans,poly-cis-dolichyl phosphate + H(+). It catalyses the reaction a di-trans,poly-cis-dolichyl beta-D-mannosyl phosphate + L-threonyl-[protein] = 3-O-(alpha-D-mannosyl)-L-threonyl-[protein] + a di-trans,poly-cis-dolichyl phosphate + H(+). Its pathway is protein modification; protein glycosylation. Its function is as follows. Protein O-mannosyltransferase involved in O-glycosylation which is essential for cell wall rigidity. Forms a heterodimeric complex with PMT2 and more rarely with PMT3 to transfer mannose from Dol-P-mannose to Ser or Thr residues on proteins. The PMT1-PMT2 complex participates in oxidative protein folding, ER-associated protein degradation (ERAD), as well as ER export. Required for incorporation of proteins in the cell wall. The chain is Dolichyl-phosphate-mannose--protein mannosyltransferase 1 from Saccharomyces cerevisiae (strain ATCC 204508 / S288c) (Baker's yeast).